Here is an 839-residue protein sequence, read N- to C-terminus: Periplasmic nitrate reductase (839 aa).

A signal peptide (tat-type signal) is located at residues 1-34 (MTLTRRDFIKANAAAAAATAAAVNLPLVPSMAQA). One can recognise a 4Fe-4S Mo/W bis-MGD-type domain in the interval 46–102 (IKWDKAACRFCGTGCSVLVGTKGGRVVATQGDPDAPVNRGLNCIKGYFLSKIMYGED). Positions 53, 56, 60, and 88 each coordinate [4Fe-4S] cluster. Residues lysine 90, glutamine 157, asparagine 182, cysteine 186, 219–226 (WGSNMAEM), 250–254 (STYEH), 269–271 (QTD), methionine 379, glutamine 383, asparagine 489, 515–516 (SD), lysine 538, aspartate 565, and 729–738 (TGRVLEHWHT) contribute to the Mo-bis(molybdopterin guanine dinucleotide) site. Phenylalanine 805 contributes to the substrate binding site. Mo-bis(molybdopterin guanine dinucleotide) is bound by residues asparagine 813 and lysine 830.

Belongs to the prokaryotic molybdopterin-containing oxidoreductase family. NasA/NapA/NarB subfamily. In terms of assembly, component of the periplasmic nitrate reductase NapAB complex composed of NapA and NapB. [4Fe-4S] cluster is required as a cofactor. Mo-bis(molybdopterin guanine dinucleotide) serves as cofactor. In terms of processing, predicted to be exported by the Tat system. The position of the signal peptide cleavage has not been experimentally proven.

Its subcellular location is the periplasm. The catalysed reaction is 2 Fe(II)-[cytochrome] + nitrate + 2 H(+) = 2 Fe(III)-[cytochrome] + nitrite + H2O. Functionally, catalytic subunit of the periplasmic nitrate reductase complex NapAB. Receives electrons from NapB and catalyzes the reduction of nitrate to nitrite. This Laribacter hongkongensis (strain HLHK9) protein is Periplasmic nitrate reductase.